A 982-amino-acid polypeptide reads, in one-letter code: ATP-dependent DNA helicase Q5 (982 aa).

The Helicase ATP-binding domain maps to 39 to 213 (MAVVKGAEDV…FAALHLKQPV (175 aa)). An ATP-binding site is contributed by 52-59 (MPTGAGKS). The DEAH box motif lies at 157-160 (DEAH). The region spanning 241-398 (NLRDFCLKAL…NKPSDKATLL (158 aa)) is the Helicase C-terminal domain. Zn(2+) contacts are provided by Cys-412, Cys-428, Cys-432, and Cys-435. Phosphoserine occurs at positions 489 and 492. The interaction with POLR2A stretch occupies residues 491 to 621 (GSGDEGRDEA…ASKDGQLYDM (131 aa)). Residue Thr-527 is modified to Phosphothreonine. Residues 653 to 726 (PKRVGAGFSK…ALGSSVNCGD (74 aa)) form an interaction with RAD51 region. Disordered regions lie at residues 675–797 (GKSH…PGKC) and 812–893 (QTEG…AQEP). Ser-728 bears the Phosphoserine; by CDK1 mark.

This sequence belongs to the helicase family. RecQ subfamily. As to quaternary structure, monomer. Interacts with TOP2A, TOP3A and TOP3B. Interacts with RNA polymerase II subunit POLR2A. Identified in a complex with the RNA polymerase II core bound to DNA. Interacts with RAD51. Interacts with WRN; this interaction stimulates WRN helicase activity on DNA fork duplexes. Interacts with MUS1; this interaction promotes MUS81-dependent mitotic DNA synthesis. It depends on Zn(2+) as a cofactor. Phosphorylated by CDK1 at Ser-728; this phosphorylation is required for RECQL5-mediated disruption of RAD51 filaments on stalled replication forks.

The protein resides in the nucleus. It is found in the nucleoplasm. The catalysed reaction is Couples ATP hydrolysis with the unwinding of duplex DNA by translocating in the 3'-5' direction.. It catalyses the reaction ATP + H2O = ADP + phosphate + H(+). Functionally, DNA helicase that plays an important role in DNA replication, transcription and repair. Binds to the RNA polymerase II subunit POLR2A during transcription elongation and suppresses transcription-associated genomic instability. Also associates with POLR1A and enforces the stability of ribosomal DNA arrays. Plays an important role in mitotic chromosome separation after cross-over events and cell cycle progress. Mechanistically, removes RAD51 filaments protecting stalled replication forks at common fragile sites and stimulates MUS81-EME1 endonuclease leading to mitotic DNA synthesis. Required for efficient DNA repair, including repair of inter-strand cross-links. Stimulates DNA decatenation mediated by TOP2A. Prevents sister chromatid exchange and homologous recombination. This chain is ATP-dependent DNA helicase Q5 (Recql5), found in Mus musculus (Mouse).